Consider the following 444-residue polypeptide: Serine--tRNA ligase (444 aa).

243–245 (TAE) provides a ligand contact to L-serine. 274–276 (RSE) is an ATP binding site. E297 contacts L-serine. 361–364 (EISS) provides a ligand contact to ATP. An L-serine-binding site is contributed by S397.

It belongs to the class-II aminoacyl-tRNA synthetase family. Type-1 seryl-tRNA synthetase subfamily. As to quaternary structure, homodimer. The tRNA molecule binds across the dimer.

The protein localises to the cytoplasm. It catalyses the reaction tRNA(Ser) + L-serine + ATP = L-seryl-tRNA(Ser) + AMP + diphosphate + H(+). The catalysed reaction is tRNA(Sec) + L-serine + ATP = L-seryl-tRNA(Sec) + AMP + diphosphate + H(+). Its pathway is aminoacyl-tRNA biosynthesis; selenocysteinyl-tRNA(Sec) biosynthesis; L-seryl-tRNA(Sec) from L-serine and tRNA(Sec): step 1/1. Functionally, catalyzes the attachment of serine to tRNA(Ser). Is also able to aminoacylate tRNA(Sec) with serine, to form the misacylated tRNA L-seryl-tRNA(Sec), which will be further converted into selenocysteinyl-tRNA(Sec). This is Serine--tRNA ligase from Acidobacterium capsulatum (strain ATCC 51196 / DSM 11244 / BCRC 80197 / JCM 7670 / NBRC 15755 / NCIMB 13165 / 161).